We begin with the raw amino-acid sequence, 263 residues long: 3-methyl-2-oxobutanoate hydroxymethyltransferase (263 aa).

Residues Asp-45 and Asp-84 each coordinate Mg(2+). Residues 45 to 46, Asp-84, and Lys-112 contribute to the 3-methyl-2-oxobutanoate site; that span reads DS. Glu-114 is a binding site for Mg(2+). Glu-180 acts as the Proton acceptor in catalysis.

This sequence belongs to the PanB family. As to quaternary structure, homodecamer; pentamer of dimers. Mg(2+) is required as a cofactor.

The protein resides in the cytoplasm. The catalysed reaction is 3-methyl-2-oxobutanoate + (6R)-5,10-methylene-5,6,7,8-tetrahydrofolate + H2O = 2-dehydropantoate + (6S)-5,6,7,8-tetrahydrofolate. It participates in cofactor biosynthesis; (R)-pantothenate biosynthesis; (R)-pantoate from 3-methyl-2-oxobutanoate: step 1/2. Catalyzes the reversible reaction in which hydroxymethyl group from 5,10-methylenetetrahydrofolate is transferred onto alpha-ketoisovalerate to form ketopantoate. The polypeptide is 3-methyl-2-oxobutanoate hydroxymethyltransferase (Klebsiella pneumoniae subsp. pneumoniae (strain ATCC 700721 / MGH 78578)).